Consider the following 488-residue polypeptide: Lysine--tRNA ligase (488 aa).

Residues glutamate 397 and glutamate 404 each coordinate Mg(2+).

This sequence belongs to the class-II aminoacyl-tRNA synthetase family. Homodimer. It depends on Mg(2+) as a cofactor.

Its subcellular location is the cytoplasm. It catalyses the reaction tRNA(Lys) + L-lysine + ATP = L-lysyl-tRNA(Lys) + AMP + diphosphate. This Mycoplasmopsis fermentans (strain ATCC 19989 / NBRC 14854 / NCTC 10117 / PG18) (Mycoplasma fermentans) protein is Lysine--tRNA ligase (lysS).